Consider the following 972-residue polypeptide: Structural polyprotein (972 aa).

A divalent metal cation is bound at residue Asp26. Positions 509–734 (SGSEAGSYSK…YLGQLMRTTA (226 aa)) constitute a Peptidase S50 domain. The Nucleophile role is filled by Ser633. Lys674 is an active-site residue. 2 disordered regions span residues 797–817 (STPP…AQEA) and 917–972 (GGRG…DGEV). Over residues 801–817 (KHQEKPKGPDQHTAQEA) the composition is skewed to basic and acidic residues.

As to quaternary structure, homotrimer. A central divalent metal (possibly cobalt) stabilizes the VP2 trimer. Homodimer. interacts (via C-terminus) with VP1 in the cytoplasm. Interacts with VP2. Specific enzymatic cleavages yield mature proteins. Capsid assembly seems to be regulated by polyprotein processing. The protease VP4 cleaves itself off the polyprotein, thus releasing pre-VP2 and VP3 within the infected cell. During capsid assembly, the C-terminus of pre-VP2 is further processed by VP4, giving rise to VP2, the external capsid protein and three small peptides that all stay closely associated with the capsid.

The protein resides in the virion. The protein localises to the host cytoplasm. Capsid protein VP2 self assembles to form an icosahedral capsid with a T=13 symmetry, about 70 nm in diameter, and consisting of 260 VP2 trimers. The capsid encapsulates the genomic dsRNA. VP2 is also involved in attachment and entry into the host cell. Functionally, the precursor of VP2 plays an important role in capsid assembly. First, pre-VP2 and VP2 oligomers assemble to form a procapsid. Then, the pre-VP2 intermediates may be processed into VP2 proteins by proteolytic cleavage mediated by VP4 to obtain the mature virion. The final capsid is composed of pentamers and hexamers but VP2 has a natural tendency to assemble into all-pentameric structures. Therefore pre-VP2 may be required to allow formation of the hexameric structures. In terms of biological role, protease VP4 is a serine protease that cleaves the polyprotein into its final products. Pre-VP2 is first partially cleaved, and may be completely processed by VP4 upon capsid maturation. Its function is as follows. Capsid protein VP3 plays a key role in virion assembly by providing a scaffold for the capsid composed of VP2. May self-assemble to form a T=4-like icosahedral inner-capsid composed of at least 180 trimers. Plays a role in genomic RNA packaging by recruiting VP1 into the capsid and interacting with the dsRNA genome segments to form a ribonucleoprotein complex. Additionally, the interaction of the VP3 C-terminal tail with VP1 removes the inherent structural blockade of the polymerase active site. Thus, VP3 can also function as a transcriptional activator. Structural peptide 1 is a small peptide derived from the C-terminus of pre-VP2. It destabilizes and perforates cell membranes, suggesting a role during viral entry. Functionally, structural peptide 2 is a small peptide derived from the C-terminus of pre-VP2. It is not essential for virus viability, but viral growth is affected when this protein is absent. In terms of biological role, structural peptide 3 is a small peptide derived from pre-VP2 C-terminus. It is not essential for virus viability, but viral growth is affected when this protein is absent. In Oncorhynchus mykiss (Rainbow trout), this protein is Structural polyprotein.